We begin with the raw amino-acid sequence, 434 residues long: 3-phosphoshikimate 1-carboxyvinyltransferase (434 aa).

Lys22, Ser23, and Arg27 together coordinate 3-phosphoshikimate. Lys22 provides a ligand contact to phosphoenolpyruvate. 2 residues coordinate phosphoenolpyruvate: Gly93 and Arg121. 3-phosphoshikimate contacts are provided by Ser168, Ser169, Gln170, Ser199, Asp320, and Lys347. Gln170 contributes to the phosphoenolpyruvate binding site. The active-site Proton acceptor is the Asp320. Arg351, Arg394, and Lys419 together coordinate phosphoenolpyruvate.

It belongs to the EPSP synthase family. As to quaternary structure, monomer.

It localises to the cytoplasm. It catalyses the reaction 3-phosphoshikimate + phosphoenolpyruvate = 5-O-(1-carboxyvinyl)-3-phosphoshikimate + phosphate. It functions in the pathway metabolic intermediate biosynthesis; chorismate biosynthesis; chorismate from D-erythrose 4-phosphate and phosphoenolpyruvate: step 6/7. Functionally, catalyzes the transfer of the enolpyruvyl moiety of phosphoenolpyruvate (PEP) to the 5-hydroxyl of shikimate-3-phosphate (S3P) to produce enolpyruvyl shikimate-3-phosphate and inorganic phosphate. This is 3-phosphoshikimate 1-carboxyvinyltransferase from Burkholderia lata (strain ATCC 17760 / DSM 23089 / LMG 22485 / NCIMB 9086 / R18194 / 383).